We begin with the raw amino-acid sequence, 345 residues long: Ribosomal RNA small subunit methyltransferase H (345 aa).

Residues 47 to 49 (GGY), Asp-65, Phe-92, Asp-113, and Gln-120 contribute to the S-adenosyl-L-methionine site. The disordered stretch occupies residues 296-345 (EPGPDEVAGNPRARSAKLRAAERTNAPAHPGGDLMGLLPAPPPQRHGRRR).

The protein belongs to the methyltransferase superfamily. RsmH family.

The protein resides in the cytoplasm. The catalysed reaction is cytidine(1402) in 16S rRNA + S-adenosyl-L-methionine = N(4)-methylcytidine(1402) in 16S rRNA + S-adenosyl-L-homocysteine + H(+). Its function is as follows. Specifically methylates the N4 position of cytidine in position 1402 (C1402) of 16S rRNA. The polypeptide is Ribosomal RNA small subunit methyltransferase H (Xanthobacter autotrophicus (strain ATCC BAA-1158 / Py2)).